A 552-amino-acid chain; its full sequence is FERRY endosomal RAB5 effector complex subunit 3 (552 aa).

At serine 79 the chain carries Phosphoserine.

As to quaternary structure, component of the FERRY complex composed of five subunits, TBCK, PPP1R21, FERRY3, CRYZL1 and GATD1 with a ratio of 1:2:1:2:4, respectively.

Its subcellular location is the cytoplasm. It localises to the early endosome. Its function is as follows. Component of the FERRY complex (Five-subunit Endosomal Rab5 and RNA/ribosome intermediary). The FERRY complex directly interacts with mRNAs and RAB5A, and functions as a RAB5A effector involved in the localization and the distribution of specific mRNAs most likely by mediating their endosomal transport. The complex recruits mRNAs and ribosomes to early endosomes through direct mRNA-interaction. Plays a role in mast cell degranulation. The protein is FERRY endosomal RAB5 effector complex subunit 3 of Mus musculus (Mouse).